Reading from the N-terminus, the 334-residue chain is Phosphoribosylformylglycinamidine cyclo-ligase (334 aa).

Belongs to the AIR synthase family.

It localises to the cytoplasm. It catalyses the reaction 2-formamido-N(1)-(5-O-phospho-beta-D-ribosyl)acetamidine + ATP = 5-amino-1-(5-phospho-beta-D-ribosyl)imidazole + ADP + phosphate + H(+). Its pathway is purine metabolism; IMP biosynthesis via de novo pathway; 5-amino-1-(5-phospho-D-ribosyl)imidazole from N(2)-formyl-N(1)-(5-phospho-D-ribosyl)glycinamide: step 2/2. The chain is Phosphoribosylformylglycinamidine cyclo-ligase from Pyrococcus horikoshii (strain ATCC 700860 / DSM 12428 / JCM 9974 / NBRC 100139 / OT-3).